A 168-amino-acid chain; its full sequence is NADH dehydrogenase [ubiquinone] 1 alpha subcomplex assembly factor 2 (168 aa).

Over residues Lys108–Lys118 the composition is skewed to basic and acidic residues. The segment at Lys108–Gln168 is disordered. The residue at position 133 (Ser133) is a Phosphoserine. Residues Glu144 to Pro155 are compositionally biased toward polar residues.

This sequence belongs to the complex I NDUFA12 subunit family. Interacts with ARMC9.

The protein localises to the mitochondrion. Its function is as follows. Acts as a molecular chaperone for mitochondrial complex I assembly. Complex I functions in the transfer of electrons from NADH to the respiratory chain. The immediate electron acceptor for the enzyme is believed to be ubiquinone. Is involved in the initial steps of cilia formation, including removal of CP110 from the mother centrioles, docking of membrane vesicles to the mother centrioles, and establishment of the transition zone. This Bos taurus (Bovine) protein is NADH dehydrogenase [ubiquinone] 1 alpha subcomplex assembly factor 2 (NDUFAF2).